The primary structure comprises 227 residues: NADH-quinone oxidoreductase subunit C (227 aa).

This sequence belongs to the complex I 30 kDa subunit family. NDH-1 is composed of 14 different subunits. Subunits NuoB, C, D, E, F, and G constitute the peripheral sector of the complex.

It localises to the cell inner membrane. The catalysed reaction is a quinone + NADH + 5 H(+)(in) = a quinol + NAD(+) + 4 H(+)(out). Functionally, NDH-1 shuttles electrons from NADH, via FMN and iron-sulfur (Fe-S) centers, to quinones in the respiratory chain. The immediate electron acceptor for the enzyme in this species is believed to be ubiquinone. Couples the redox reaction to proton translocation (for every two electrons transferred, four hydrogen ions are translocated across the cytoplasmic membrane), and thus conserves the redox energy in a proton gradient. In Legionella pneumophila subsp. pneumophila (strain Philadelphia 1 / ATCC 33152 / DSM 7513), this protein is NADH-quinone oxidoreductase subunit C.